A 222-amino-acid chain; its full sequence is PKHD-type hydroxylase Syncc9605_1577 (222 aa).

The region spanning 80–175 (KVHSLLVSRS…RYVCVGWIES (96 aa)) is the Fe2OG dioxygenase domain. 3 residues coordinate Fe cation: His-98, Asp-100, and His-156. Arg-166 is a binding site for 2-oxoglutarate.

The cofactor is Fe(2+). L-ascorbate is required as a cofactor.

In Synechococcus sp. (strain CC9605), this protein is PKHD-type hydroxylase Syncc9605_1577.